The chain runs to 348 residues: Anthranilate phosphoribosyltransferase (348 aa).

Residues Gly-81, 84–85 (GD), 91–94 (NVST), 109–117 (KHGNRAVSG), and Ser-121 contribute to the 5-phospho-alpha-D-ribose 1-diphosphate site. Residue Gly-81 coordinates anthranilate. Ser-93 contacts Mg(2+). Asn-112 provides a ligand contact to anthranilate. Arg-167 contacts anthranilate. Residues Asp-226 and Glu-227 each coordinate Mg(2+).

It belongs to the anthranilate phosphoribosyltransferase family. In terms of assembly, homodimer. Requires Mg(2+) as cofactor.

It carries out the reaction N-(5-phospho-beta-D-ribosyl)anthranilate + diphosphate = 5-phospho-alpha-D-ribose 1-diphosphate + anthranilate. It participates in amino-acid biosynthesis; L-tryptophan biosynthesis; L-tryptophan from chorismate: step 2/5. Functionally, catalyzes the transfer of the phosphoribosyl group of 5-phosphorylribose-1-pyrophosphate (PRPP) to anthranilate to yield N-(5'-phosphoribosyl)-anthranilate (PRA). The polypeptide is Anthranilate phosphoribosyltransferase (Ectopseudomonas mendocina (strain ymp) (Pseudomonas mendocina)).